The sequence spans 126 residues: Glycerol dehydrogenase small subunit (126 aa).

Helical transmembrane passes span 13–33, 41–61, 67–87, and 92–112; these read WLTL…VIAG, GSVY…FMLM, AFLY…EVGF, and LLPR…TIPV.

It is found in the cell membrane. The enzyme catalyses glycerol + A = dihydroxyacetone + AH2. In terms of biological role, catalyzes the oxidation of glycerol to glycerone. Also acts, more slowly, on a number of other polyols including D-sorbitol, D-arabinitol, D-mannitol, meso-erythritol, adonitol and propylene glycol. The sequence is that of Glycerol dehydrogenase small subunit (sldB) from Gluconobacter oxydans (strain 621H) (Gluconobacter suboxydans).